A 356-amino-acid chain; its full sequence is Tyrosine recombinase XerS (356 aa).

In terms of domain architecture, Core-binding (CB) spans 16-121 (IMPWYVLDYY…ALSSLYKYLT (106 aa)). In terms of domain architecture, Tyr recombinase spans 169-354 (AFLDYVDKEY…VNDEQKNALD (186 aa)). Active-site residues include arginine 210, lysine 234, histidine 306, arginine 309, and histidine 332. Tyrosine 341 (O-(3'-phospho-DNA)-tyrosine intermediate) is an active-site residue.

Belongs to the 'phage' integrase family. XerS subfamily.

The protein resides in the cytoplasm. With respect to regulation, ftsK is required for recombination. Functionally, site-specific tyrosine recombinase, which acts by catalyzing the cutting and rejoining of the recombining DNA molecules. Essential to convert dimers of the bacterial chromosome into monomers to permit their segregation at cell division. The chain is Tyrosine recombinase XerS from Streptococcus equi subsp. zooepidemicus (strain MGCS10565).